The primary structure comprises 262 residues: Thiazole synthase (262 aa).

The active-site Schiff-base intermediate with DXP is Lys97. 1-deoxy-D-xylulose 5-phosphate is bound by residues Gly158, 185–186 (AG), and 207–208 (NT). The segment at 243 to 262 (DKAQASTPTVGQPFWHSAEY) is disordered.

The protein belongs to the ThiG family. Homotetramer. Forms heterodimers with either ThiH or ThiS.

The protein localises to the cytoplasm. The enzyme catalyses [ThiS sulfur-carrier protein]-C-terminal-Gly-aminoethanethioate + 2-iminoacetate + 1-deoxy-D-xylulose 5-phosphate = [ThiS sulfur-carrier protein]-C-terminal Gly-Gly + 2-[(2R,5Z)-2-carboxy-4-methylthiazol-5(2H)-ylidene]ethyl phosphate + 2 H2O + H(+). It functions in the pathway cofactor biosynthesis; thiamine diphosphate biosynthesis. Functionally, catalyzes the rearrangement of 1-deoxy-D-xylulose 5-phosphate (DXP) to produce the thiazole phosphate moiety of thiamine. Sulfur is provided by the thiocarboxylate moiety of the carrier protein ThiS. In vitro, sulfur can be provided by H(2)S. The sequence is that of Thiazole synthase from Neisseria meningitidis serogroup A / serotype 4A (strain DSM 15465 / Z2491).